We begin with the raw amino-acid sequence, 470 residues long: Serine--tRNA ligase (470 aa).

An L-serine-binding site is contributed by 272–274; the sequence is TAE. Position 303–305 (303–305) interacts with ATP; the sequence is RAE. Glu-326 is an L-serine binding site. Residue 393–396 participates in ATP binding; sequence EISS. Ser-428 serves as a coordination point for L-serine.

Belongs to the class-II aminoacyl-tRNA synthetase family. Type-1 seryl-tRNA synthetase subfamily. As to quaternary structure, homodimer. The tRNA molecule binds across the dimer.

It is found in the cytoplasm. The catalysed reaction is tRNA(Ser) + L-serine + ATP = L-seryl-tRNA(Ser) + AMP + diphosphate + H(+). It catalyses the reaction tRNA(Sec) + L-serine + ATP = L-seryl-tRNA(Sec) + AMP + diphosphate + H(+). The protein operates within aminoacyl-tRNA biosynthesis; selenocysteinyl-tRNA(Sec) biosynthesis; L-seryl-tRNA(Sec) from L-serine and tRNA(Sec): step 1/1. Its function is as follows. Catalyzes the attachment of serine to tRNA(Ser). Is also able to aminoacylate tRNA(Sec) with serine, to form the misacylated tRNA L-seryl-tRNA(Sec), which will be further converted into selenocysteinyl-tRNA(Sec). In Nitrobacter hamburgensis (strain DSM 10229 / NCIMB 13809 / X14), this protein is Serine--tRNA ligase.